Reading from the N-terminus, the 100-residue chain is Urease subunit gamma (100 aa).

This sequence belongs to the urease gamma subunit family. Heterotrimer of UreA (gamma), UreB (beta) and UreC (alpha) subunits. Three heterotrimers associate to form the active enzyme.

It localises to the cytoplasm. It catalyses the reaction urea + 2 H2O + H(+) = hydrogencarbonate + 2 NH4(+). It participates in nitrogen metabolism; urea degradation; CO(2) and NH(3) from urea (urease route): step 1/1. The polypeptide is Urease subunit gamma (Rhodopseudomonas palustris (strain BisB5)).